Here is a 256-residue protein sequence, read N- to C-terminus: NifU-like protein, mitochondrial (256 aa).

A CxxC motif motif is present at residues 196 to 199 (CTSC).

It belongs to the NifU family. In terms of assembly, homodimer; in absence of BOL3, probably bridged by an iron-sulfure cluster. Interacts with BOL3. Interacts with apo-target proteins, such as ACO1, LYS4, ACO2 and SDH2.

Its subcellular location is the mitochondrion matrix. Functionally, involved in iron homeostasis within the mitochondrion where it is involved in the assembly of iron-sulfur proteins. Together with BOL3, required during the last step of iron-sulfur protein assembly when the iron-sulfur cluster is inserted into the target protein. Required for protecting iron sulfur clusters from oxidative damage. This Saccharomyces cerevisiae (strain ATCC 204508 / S288c) (Baker's yeast) protein is NifU-like protein, mitochondrial (NFU1).